Here is a 35-residue protein sequence, read N- to C-terminus: Photosystem II reaction center protein M (35 aa).

The chain crosses the membrane as a helical span at residues 5–25 (ILGLIATALFILIPTSFLIIL).

Belongs to the PsbM family. PSII is composed of 1 copy each of membrane proteins PsbA, PsbB, PsbC, PsbD, PsbE, PsbF, PsbH, PsbI, PsbJ, PsbK, PsbL, PsbM, PsbT, PsbX, PsbY, PsbZ, Psb30/Ycf12, at least 3 peripheral proteins of the oxygen-evolving complex and a large number of cofactors. It forms dimeric complexes.

The protein localises to the plastid. The protein resides in the chloroplast thylakoid membrane. One of the components of the core complex of photosystem II (PSII). PSII is a light-driven water:plastoquinone oxidoreductase that uses light energy to abstract electrons from H(2)O, generating O(2) and a proton gradient subsequently used for ATP formation. It consists of a core antenna complex that captures photons, and an electron transfer chain that converts photonic excitation into a charge separation. This subunit is found at the monomer-monomer interface. This Oltmannsiellopsis viridis (Marine flagellate) protein is Photosystem II reaction center protein M.